Here is a 317-residue protein sequence, read N- to C-terminus: Nucleosome assembly protein 1;4 (317 aa).

Positions 52 to 67 match the Nuclear export signal motif; it reads LSPKVTKRVLFLKDIQ. Residues 214–219 carry the Nuclear localization signal motif; that stretch reads KKKTKK. Residues 297 to 317 form a disordered region; the sequence is ALVDEDDSDDNDDDDNDEKSD. A compositionally biased stretch (acidic residues) spans 298–317; it reads LVDEDDSDDNDDDDNDEKSD.

Belongs to the nucleosome assembly protein (NAP) family. In terms of assembly, can form homomeric and heteromeric protein complexes with NAP1;1, NAP1;2 and NAP1;3. Binds histone H2A. In terms of tissue distribution, expressed in the root segment covering the apical end of the differentiation zone, the elongation zone of the root and the mature pollen within the anthers of open flowers.

It is found in the nucleus. It localises to the cytoplasm. In terms of biological role, may modulate chromatin structure by regulation of nucleosome assembly/disassembly. This chain is Nucleosome assembly protein 1;4 (NAP1;4), found in Arabidopsis thaliana (Mouse-ear cress).